We begin with the raw amino-acid sequence, 1398 residues long: DNA-directed RNA polymerase subunit beta' (1398 aa).

Positions 71, 73, 86, and 89 each coordinate Zn(2+). Residues Asp-462, Asp-464, and Asp-466 each contribute to the Mg(2+) site. Zn(2+)-binding residues include Cys-810, Cys-883, Cys-890, and Cys-893. Positions Glu-1377–Glu-1398 are disordered. The span at Ala-1380–Pro-1392 shows a compositional bias: low complexity.

This sequence belongs to the RNA polymerase beta' chain family. In terms of assembly, the RNAP catalytic core consists of 2 alpha, 1 beta, 1 beta' and 1 omega subunit. When a sigma factor is associated with the core the holoenzyme is formed, which can initiate transcription. It depends on Mg(2+) as a cofactor. Zn(2+) serves as cofactor.

The enzyme catalyses RNA(n) + a ribonucleoside 5'-triphosphate = RNA(n+1) + diphosphate. Functionally, DNA-dependent RNA polymerase catalyzes the transcription of DNA into RNA using the four ribonucleoside triphosphates as substrates. This chain is DNA-directed RNA polymerase subunit beta', found in Bradyrhizobium diazoefficiens (strain JCM 10833 / BCRC 13528 / IAM 13628 / NBRC 14792 / USDA 110).